The chain runs to 1184 residues: MFQLRNFEAIKIGLASPEKIREWSRGEVKKPETINYRTLKPERDGLFCERIFGPTKDWECHCGKYKRVRYKGVVCDRCGVEVTRSKVRRERMGHIELAAPVAHIWYVKGIPSRMGLLLDMSPRALEKVLYFVSYVVIDPGDTPLTKKQLLSEKEYRDYLDKYGNRFRAGMGAEAIKELLQEIDLEKLSKELRAEIRESTGQKRVRAIRRLEVVQAFIDSGNRPEWMILDVIPVIPPDLRPMVQLDGGRFATSDLNDLYRRVINRNNRLKKLLDLGAPDIIVRNEKRMLQEAVDALIDNGRRGRPVTGPGNRPLKSLSDMLKGKQGRFRQNLLGKRVDYSGRSVIVVGPELKVYQCGLPKEMALELFKPFVMKKLVDEGLAQHIKSAKRMVEKVKPEVWDVLEEVIKEHPVLLNRAPTLHRLGIQAFEPVLVEGRAIKLHPLVCTAYNADFDGDQMAVHVPLSMEAQAEARFLMLAANNILKPQDGKPVMTPTQDMVLGCYYLTADEEGVPGEGKYFSSPEEAIMAYQLGYIHIHAKIKVKMTKEIDGVKKSKIIETTVGKIIFNEAIPQDLGYVDRTNPETAFDLEINDLVDKSKLGKILDRVYRLHGPTKTAETLDKIKELGFRYSTKAAITVSVSDMVIPKEKEKLLKEADEMVSKIESQFRRGLISEEERYESVIRTWNMTTEKVTEALMASLDKFNPIFMMAHSGARGSKNQIRQLAGMRGLMADPSGRIIELPIRSNFREGLNVLEFFISTHGARKGLADTALRTADSGYLTRRLVDVSQDVIVREDDCGADEGIYVEEIREGNEIIEKLADRIIGRVAAEDVIDNEGNIIVRRNELINEEEAEKIEKAGITKVRIRSLLTCKSRHGVCRMCYGRDLATGELVNIGEAVGIIAAQAIGEPGTQLTMRTFHTGGVAGADITQGLPRVEELFEARKPKGLAVISEISGVVRINESKKRREVIVTDEENNISKTYLIPYGSRLKVHDGQVIQAGDELTEGSVNPHDLLKIKGIFAVQTYLLQEVQKVYRLQGVEINDKHIEVIIRQMMRKVKVEDPGDTSMLPGELIDMFKFEDENKKAIEKGLRPATGRRALLGITKAALATDSFLSAASFQETTRVLTDAAIKGKVDPLLGLKENVIIGKLIPAGTGLSRYRNISVVKKVNDQQERQDKEKEETEVKASN.

Zn(2+) is bound by residues C60, C62, C75, and C78. Residues D449, D451, and D453 each contribute to the Mg(2+) site. Zn(2+)-binding residues include C794, C867, C874, and C877. The disordered stretch occupies residues 1165–1184 (NDQQERQDKEKEETEVKASN).

The protein belongs to the RNA polymerase beta' chain family. As to quaternary structure, the RNAP catalytic core consists of 2 alpha, 1 beta, 1 beta' and 1 omega subunit. When a sigma factor is associated with the core the holoenzyme is formed, which can initiate transcription. It depends on Mg(2+) as a cofactor. Requires Zn(2+) as cofactor.

It carries out the reaction RNA(n) + a ribonucleoside 5'-triphosphate = RNA(n+1) + diphosphate. Its function is as follows. DNA-dependent RNA polymerase catalyzes the transcription of DNA into RNA using the four ribonucleoside triphosphates as substrates. This is DNA-directed RNA polymerase subunit beta' from Thermoanaerobacter pseudethanolicus (strain ATCC 33223 / 39E) (Clostridium thermohydrosulfuricum).